The following is a 167-amino-acid chain: Histidinol dehydrogenase (167 aa).

Residues glutamine 109 and histidine 112 each contribute to the Zn(2+) site.

Belongs to the histidinol dehydrogenase family. Homodimer. Zn(2+) is required as a cofactor.

The enzyme catalyses L-histidinol + 2 NAD(+) + H2O = L-histidine + 2 NADH + 3 H(+). It functions in the pathway amino-acid biosynthesis; L-histidine biosynthesis; L-histidine from 5-phospho-alpha-D-ribose 1-diphosphate: step 9/9. In terms of biological role, catalyzes the sequential NAD-dependent oxidations of L-histidinol to L-histidinaldehyde and then to L-histidine. This is Histidinol dehydrogenase (hisD) from Salmonella enteritidis.